The primary structure comprises 196 residues: Recombination protein RecR (196 aa).

Residues 57–72 (CERCHTFTQADICATC) form a C4-type zinc finger. In terms of domain architecture, Toprim spans 80–175 (SKLCVVETPA…RLTRLARGVP (96 aa)).

Belongs to the RecR family.

Its function is as follows. May play a role in DNA repair. It seems to be involved in an RecBC-independent recombinational process of DNA repair. It may act with RecF and RecO. The polypeptide is Recombination protein RecR (Albidiferax ferrireducens (strain ATCC BAA-621 / DSM 15236 / T118) (Rhodoferax ferrireducens)).